The following is a 198-amino-acid chain: Glycerol-3-phosphate acyltransferase (198 aa).

6 consecutive transmembrane segments (helical) span residues 1–21 (MNLL…GYLA), 55–75 (VFLL…YLLL), 79–99 (WQVA…WLNW), 111–131 (IFLG…IIMI), 136–156 (IVSL…FLSF), and 158–178 (GSNL…LVIW).

It belongs to the PlsY family. As to quaternary structure, probably interacts with PlsX.

It is found in the cell inner membrane. It carries out the reaction an acyl phosphate + sn-glycerol 3-phosphate = a 1-acyl-sn-glycero-3-phosphate + phosphate. It functions in the pathway lipid metabolism; phospholipid metabolism. Functionally, catalyzes the transfer of an acyl group from acyl-phosphate (acyl-PO(4)) to glycerol-3-phosphate (G3P) to form lysophosphatidic acid (LPA). This enzyme utilizes acyl-phosphate as fatty acyl donor, but not acyl-CoA or acyl-ACP. The sequence is that of Glycerol-3-phosphate acyltransferase from Prochlorococcus marinus (strain NATL2A).